The chain runs to 490 residues: Probable glycine dehydrogenase (decarboxylating) subunit 2 (490 aa).

Lys273 is subject to N6-(pyridoxal phosphate)lysine.

Belongs to the GcvP family. C-terminal subunit subfamily. The glycine cleavage system is composed of four proteins: P, T, L and H. In this organism, the P 'protein' is a heterodimer of two subunits. Pyridoxal 5'-phosphate is required as a cofactor.

It carries out the reaction N(6)-[(R)-lipoyl]-L-lysyl-[glycine-cleavage complex H protein] + glycine + H(+) = N(6)-[(R)-S(8)-aminomethyldihydrolipoyl]-L-lysyl-[glycine-cleavage complex H protein] + CO2. In terms of biological role, the glycine cleavage system catalyzes the degradation of glycine. The P protein binds the alpha-amino group of glycine through its pyridoxal phosphate cofactor; CO(2) is released and the remaining methylamine moiety is then transferred to the lipoamide cofactor of the H protein. The polypeptide is Probable glycine dehydrogenase (decarboxylating) subunit 2 (Staphylococcus aureus (strain Mu50 / ATCC 700699)).